Here is a 131-residue protein sequence, read N- to C-terminus: ER membrane protein complex subunit 5 (131 aa).

Topologically, residues methionine 1–proline 3 are cytoplasmic. The helical transmembrane segment at serine 4–phenylalanine 22 threads the bilayer. The Lumenal segment spans residues serine 23–isoleucine 43. Residues aspartate 44–isoleucine 63 form a helical membrane-spanning segment. At alanine 64 to arginine 131 the chain is on the cytoplasmic side. Position 120 is a phosphoserine (serine 120).

This sequence belongs to the membrane magnesium transporter (TC 1.A.67) family. In terms of assembly, component of the ER membrane protein complex (EMC).

The protein resides in the endoplasmic reticulum membrane. It localises to the golgi apparatus membrane. The protein localises to the early endosome membrane. Part of the endoplasmic reticulum membrane protein complex (EMC) that enables the energy-independent insertion into endoplasmic reticulum membranes of newly synthesized membrane proteins. Preferentially accommodates proteins with transmembrane domains that are weakly hydrophobic or contain destabilizing features such as charged and aromatic residues. Involved in the cotranslational insertion of multi-pass membrane proteins in which stop-transfer membrane-anchor sequences become ER membrane spanning helices. It is also required for the post-translational insertion of tail-anchored/TA proteins in endoplasmic reticulum membranes. By mediating the proper cotranslational insertion of N-terminal transmembrane domains in an N-exo topology, with translocated N-terminus in the lumen of the ER, controls the topology of multi-pass membrane proteins like the G protein-coupled receptors. By regulating the insertion of various proteins in membranes, it is indirectly involved in many cellular processes. May be involved in Mg(2+) transport. This is ER membrane protein complex subunit 5 from Homo sapiens (Human).